We begin with the raw amino-acid sequence, 482 residues long: ATP synthase subunit beta (482 aa).

162 to 169 contributes to the ATP binding site; that stretch reads GGAGVGKT.

In terms of assembly, F-type ATPases have 2 components, CF(1) - the catalytic core - and CF(0) - the membrane proton channel. CF(1) has five subunits: alpha(3), beta(3), gamma(1), delta(1), epsilon(1). CF(0) has four main subunits: a(1), b(1), b'(1) and c(9-12).

It is found in the cellular thylakoid membrane. It catalyses the reaction ATP + H2O + 4 H(+)(in) = ADP + phosphate + 5 H(+)(out). Its activity is regulated as follows. Inhibited by dicyclohexylcarbodiimide. In terms of biological role, produces ATP from ADP in the presence of a proton gradient across the membrane. The catalytic sites are hosted primarily by the beta subunits. Functionally, the complex from the organism is particularly stable to disruption and remains functional after 6 hrs at 55 degrees Celsius. The polypeptide is ATP synthase subunit beta (Thermosynechococcus vestitus (strain NIES-2133 / IAM M-273 / BP-1)).